Here is a 499-residue protein sequence, read N- to C-terminus: Bifunctional purine biosynthesis protein PurH (499 aa).

The 144-residue stretch at 1–144 (MIKRALISVF…KNFQDVVVLT (144 aa)) folds into the MGS-like domain.

Belongs to the PurH family.

The catalysed reaction is (6R)-10-formyltetrahydrofolate + 5-amino-1-(5-phospho-beta-D-ribosyl)imidazole-4-carboxamide = 5-formamido-1-(5-phospho-D-ribosyl)imidazole-4-carboxamide + (6S)-5,6,7,8-tetrahydrofolate. It carries out the reaction IMP + H2O = 5-formamido-1-(5-phospho-D-ribosyl)imidazole-4-carboxamide. The protein operates within purine metabolism; IMP biosynthesis via de novo pathway; 5-formamido-1-(5-phospho-D-ribosyl)imidazole-4-carboxamide from 5-amino-1-(5-phospho-D-ribosyl)imidazole-4-carboxamide (10-formyl THF route): step 1/1. It functions in the pathway purine metabolism; IMP biosynthesis via de novo pathway; IMP from 5-formamido-1-(5-phospho-D-ribosyl)imidazole-4-carboxamide: step 1/1. This is Bifunctional purine biosynthesis protein PurH from Clostridium acetobutylicum (strain ATCC 824 / DSM 792 / JCM 1419 / IAM 19013 / LMG 5710 / NBRC 13948 / NRRL B-527 / VKM B-1787 / 2291 / W).